The sequence spans 300 residues: Nucleotide-binding protein Daci_5422 (300 aa).

ATP is bound at residue Gly-10–Ser-17. GTP is bound at residue Asp-59–Ser-62.

The protein belongs to the RapZ-like family.

Displays ATPase and GTPase activities. This is Nucleotide-binding protein Daci_5422 from Delftia acidovorans (strain DSM 14801 / SPH-1).